Here is a 1079-residue protein sequence, read N- to C-terminus: DNA annealing helicase and endonuclease ZRANB3 (1079 aa).

The Helicase ATP-binding domain maps to 46–208 (IFALKRNGRC…FMQIEALFPQ (163 aa)). The tract at residues 46-481 (IFALKRNGRC…GRKEKIQAEE (436 aa)) is DNA annealing helicase activity. An ATP-binding site is contributed by 59-66 (DEMGLGKT). The DEAH box signature appears at 157-160 (DESH). The 157-residue stretch at 325-481 (AVKDYIKMML…GRKEKIQAEE (157 aa)) folds into the Helicase C-terminal domain. Positions 519–526 (QHDIRSFF) match the PIP-box motif. Ser-569 bears the Phosphoserine mark. Residues 582-601 (ASEDHCSPSEETPSQSKQIR) are disordered. Residues 590 to 600 (SEETPSQSKQI) show a composition bias toward polar residues. The RanBP2-type zinc finger occupies 621-650 (PVEGWQCSLCTYINNSELPYCEMCETPQGS). At Cys-630 the chain carries (Microbial infection) S-methylcysteine. The interval 689 to 725 (LAQSEPGQLADSKEETPKIEKEDGLTSQPGNEQWKSS) is disordered. Basic and acidic residues predominate over residues 699–712 (DSKEETPKIEKEDG). Residues 713-725 (LTSQPGNEQWKSS) are compositionally biased toward polar residues. The HNH domain maps to 1011–1051 (PGEGHFWQVDHIKPVYGGGGQCSLDNLQTLCTVCHKERTAR). The interval 1011–1079 (PGEGHFWQVD…SDITRFLVKK (69 aa)) is endonuclease activity. An APIM motif motif is present at residues 1074-1078 (RFLVK).

Belongs to the SNF2/RAD54 helicase family. Interacts (via PIP-box and RanBP2-type zinc finger) with PCNA (when PCNA is polyubiquitinated via 'Lys-63'-linked polyubiquitin). In terms of processing, (Microbial infection) Methylation at Cys-630 by enteropathogenic E.coli protein NleE or S.flexneri protein OspZ: methylation disrupts ability to bind 'Lys-63'-linked ubiquitin.

The protein resides in the nucleus. It localises to the chromosome. Functionally, DNA annealing helicase and endonuclease required to maintain genome stability at stalled or collapsed replication forks by facilitating fork restart and limiting inappropriate recombination that could occur during template switching events. Recruited to the sites of stalled DNA replication by polyubiquitinated PCNA and acts as a structure-specific endonuclease that cleaves the replication fork D-loop intermediate, generating an accessible 3'-OH group in the template of the leading strand, which is amenable to extension by DNA polymerase. In addition to endonuclease activity, also catalyzes the fork regression via annealing helicase activity in order to prevent disintegration of the replication fork and the formation of double-strand breaks. The polypeptide is DNA annealing helicase and endonuclease ZRANB3 (Homo sapiens (Human)).